We begin with the raw amino-acid sequence, 482 residues long: UDP-N-acetylmuramate--L-alanine ligase (482 aa).

Position 129–135 (129–135) interacts with ATP; the sequence is GTHGKTT.

It belongs to the MurCDEF family.

It is found in the cytoplasm. The enzyme catalyses UDP-N-acetyl-alpha-D-muramate + L-alanine + ATP = UDP-N-acetyl-alpha-D-muramoyl-L-alanine + ADP + phosphate + H(+). The protein operates within cell wall biogenesis; peptidoglycan biosynthesis. In terms of biological role, cell wall formation. In Acinetobacter baylyi (strain ATCC 33305 / BD413 / ADP1), this protein is UDP-N-acetylmuramate--L-alanine ligase.